Consider the following 185-residue polypeptide: Ribosome-recycling factor (185 aa).

This sequence belongs to the RRF family.

Its subcellular location is the cytoplasm. Functionally, responsible for the release of ribosomes from messenger RNA at the termination of protein biosynthesis. May increase the efficiency of translation by recycling ribosomes from one round of translation to another. The chain is Ribosome-recycling factor from Halorhodospira halophila (strain DSM 244 / SL1) (Ectothiorhodospira halophila (strain DSM 244 / SL1)).